Consider the following 433-residue polypeptide: Casein kinase 1-like protein 5 (433 aa).

A Protein kinase domain is found at 9–278; it reads FRLGRKIGSG…LKRLFRNLFI (270 aa). Residues 15–23 and lysine 38 each bind ATP; that span reads IGSGSFGEI. Aspartate 128 (proton acceptor) is an active-site residue. The interval 297-433 is disordered; that stretch reads QSQSGNPQPR…DDVEPQSKAL (137 aa). The span at 342-359 shows a compositional bias: basic and acidic residues; the sequence is LKQKDKNGNDSAIAKDKL. The span at 362-375 shows a compositional bias: low complexity; it reads GSLNLGRSEGSSSR. Serine 390 is modified (phosphoserine). The segment covering 407-423 has biased composition (polar residues); it reads INNNAGDETAATPQSNG.

This sequence belongs to the protein kinase superfamily. CK1 Ser/Thr protein kinase family. Casein kinase I subfamily. As to quaternary structure, monomer. Autophosphorylated.

It is found in the cytoplasm. It catalyses the reaction L-seryl-[protein] + ATP = O-phospho-L-seryl-[protein] + ADP + H(+). The catalysed reaction is L-threonyl-[protein] + ATP = O-phospho-L-threonyl-[protein] + ADP + H(+). Casein kinases are operationally defined by their preferential utilization of acidic proteins such as caseins as substrates. It can phosphorylate a large number of proteins. This is Casein kinase 1-like protein 5 from Arabidopsis thaliana (Mouse-ear cress).